A 72-amino-acid polypeptide reads, in one-letter code: Translation initiation factor IF-1 (72 aa).

Residues Met1–Lys72 form the S1-like domain.

The protein belongs to the IF-1 family. As to quaternary structure, component of the 30S ribosomal translation pre-initiation complex which assembles on the 30S ribosome in the order IF-2 and IF-3, IF-1 and N-formylmethionyl-tRNA(fMet); mRNA recruitment can occur at any time during PIC assembly.

The protein localises to the cytoplasm. Functionally, one of the essential components for the initiation of protein synthesis. Stabilizes the binding of IF-2 and IF-3 on the 30S subunit to which N-formylmethionyl-tRNA(fMet) subsequently binds. Helps modulate mRNA selection, yielding the 30S pre-initiation complex (PIC). Upon addition of the 50S ribosomal subunit IF-1, IF-2 and IF-3 are released leaving the mature 70S translation initiation complex. This chain is Translation initiation factor IF-1, found in Sinorhizobium medicae (strain WSM419) (Ensifer medicae).